The chain runs to 727 residues: Two-component response regulator-like APRR7 (727 aa).

The tract at residues 1 to 47 (MNANEEGEGSRYPITDRKTGETKFDRVESRTEKHSEEEKTNGITMDV) is disordered. The segment covering 14–40 (ITDRKTGETKFDRVESRTEKHSEEEKT) has biased composition (basic and acidic residues). Residues 79 to 197 (RVLLVENDDC…ELKILWQHVW (119 aa)) enclose the Response regulatory domain. 6 disordered regions span residues 203–265 (SSGS…KKAV), 291–312 (NPEF…QEHD), 339–416 (KDEP…KTLD), 464–487 (SRYN…SLQD), 509–560 (ESLP…QPLP), and 606–670 (VNGS…SQRE). The span at 246–259 (ASDGSSDGSGAQSS) shows a compositional bias: low complexity. Polar residues-rich tracts occupy residues 344–353 (SKTTGIMRQD), 467–487 (NPAS…SLQD), and 519–535 (VGSN…NNAF). The segment covering 538 to 555 (PGAPKVSSAGSSSVKHSS) has biased composition (low complexity). Positions 641–657 (GKNGNGDGSGSGSGSGS) are enriched in gly residues. The CCT domain occupies 669-711 (REAALTKFRQKRKERCFRKKVRYQSRKKLAEQRPRVRGQFVRK).

The protein belongs to the ARR-like family. Phosphorylated. Phosphorylation varies throughout the diurnal cycle.

The protein resides in the nucleus. In terms of biological role, transcriptional repressor of CCA1 and LHY, and positive regulator of LWD1 and LWD2 expression. Represses the expression of other clock proteins and master regulators of plant growth, development and response to abiotic stress. Involved in the positive and negative feedback loops of the circadian clock. Controls photoperiodic flowering response and temperature compensation. Expression of several members of the ARR-like family is controlled by circadian rhythm. APRR9, APRR7, and APRR5 coordinately act on the upstream region of the target genes to repress their expression from noon until midnight. The particular coordinated sequential expression of APRR9, APRR7, APRR5, APRR3 and APPR1 result to circadian waves that may be at the basis of the endogenous circadian clock. The chain is Two-component response regulator-like APRR7 (APRR7) from Arabidopsis thaliana (Mouse-ear cress).